Reading from the N-terminus, the 165-residue chain is Nucleotide-binding protein Ccon26_01810 (165 aa).

It belongs to the YajQ family.

In terms of biological role, nucleotide-binding protein. This chain is Nucleotide-binding protein Ccon26_01810, found in Campylobacter concisus (strain 13826).